The chain runs to 296 residues: Probable endonuclease 4 (296 aa).

Zn(2+) contacts are provided by His-68, His-109, Glu-144, Asp-178, His-181, His-213, Asp-226, His-228, and Glu-258.

The protein belongs to the AP endonuclease 2 family. The cofactor is Zn(2+).

The catalysed reaction is Endonucleolytic cleavage to 5'-phosphooligonucleotide end-products.. Its function is as follows. Endonuclease IV plays a role in DNA repair. It cleaves phosphodiester bonds at apurinic or apyrimidinic (AP) sites, generating a 3'-hydroxyl group and a 5'-terminal sugar phosphate. The sequence is that of Probable endonuclease 4 from Staphylococcus aureus (strain NCTC 8325 / PS 47).